A 1528-amino-acid polypeptide reads, in one-letter code: DNA topoisomerase 2-alpha (1528 aa).

Methionine 1 carries the N-acetylmethionine modification. Serine 4 is modified (phosphoserine). A Glycyl lysine isopeptide (Lys-Gly) (interchain with G-Cter in SUMO2) cross-link involves residue lysine 17. ATP-binding positions include asparagine 90, asparagine 119, and 147-149 (SSN). Glycyl lysine isopeptide (Lys-Gly) (interchain with G-Cter in SUMO2) cross-links involve residues lysine 155 and lysine 156. Residue 160–167 (GRNGYGAK) participates in ATP binding. Threonine 281 is subject to Phosphothreonine. An interaction with DNA region spans residues 341–343 (KKK). A Glycyl lysine isopeptide (Lys-Gly) (interchain with G-Cter in SUMO2) cross-link involves residue lysine 351. 375–377 (QTK) provides a ligand contact to ATP. Residues lysine 385, lysine 396, lysine 415, lysine 417, lysine 424, and lysine 439 each participate in a glycyl lysine isopeptide (Lys-Gly) (interchain with G-Cter in SUMO2) cross-link. The region spanning 454–571 (CTLILTEGDS…SLLRHRFLEE (118 aa)) is the Toprim domain. Residue glutamate 460 coordinates Mg(2+). Residues lysine 465, lysine 479, and lysine 528 each participate in a glycyl lysine isopeptide (Lys-Gly) (interchain with G-Cter in SUMO2) cross-link. 2 residues coordinate Mg(2+): aspartate 540 and aspartate 542. Residues lysine 583, lysine 598, lysine 613, lysine 621, lysine 624, lysine 631, lysine 638, lysine 654, lysine 661, and lysine 675 each participate in a glycyl lysine isopeptide (Lys-Gly) (interchain with G-Cter in SUMO2) cross-link. A Topo IIA-type catalytic domain is found at 714–1168 (IPSMVDGLKP…SPSDLWKEDL (455 aa)). The active-site O-(5'-phospho-DNA)-tyrosine intermediate is tyrosine 804. The interaction with DNA stretch occupies residues 989 to 998 (KLQSSLTCNS). Residue lysine 1074 forms a Glycyl lysine isopeptide (Lys-Gly) (interchain with G-Cter in SUMO2) linkage. 2 disordered regions span residues 1090–1118 (KEAQ…AAEA) and 1183–1211 (KQDE…VLPS). Acidic residues predominate over residues 1098–1107 (DEEENEESDT). Phosphoserine; by CK1 is present on serine 1105. The span at 1108-1118 (ETSTSDSAAEA) shows a compositional bias: low complexity. Glycyl lysine isopeptide (Lys-Gly) (interchain with G-Cter in SUMO2) cross-links involve residues lysine 1193 and lysine 1201. Residue serine 1211 is modified to Phosphoserine. Residue lysine 1226 forms a Glycyl lysine isopeptide (Lys-Gly) (interchain with G-Cter in SUMO2) linkage. A disordered region spans residues 1229–1528 (AEKKIRKKIK…EESDDDDDLF (300 aa)). Residue lysine 1238 forms a Glycyl lysine isopeptide (Lys-Gly) (interchain with G-Cter in SUMO1); alternate linkage. Residue lysine 1238 forms a Glycyl lysine isopeptide (Lys-Gly) (interchain with G-Cter in SUMO2); alternate linkage. At threonine 1245 the chain carries Phosphothreonine. Residues 1258-1270 (QRIEKKQKKEPGA) are compositionally biased toward basic and acidic residues. Residues lysine 1272, lysine 1279, and lysine 1282 each participate in a glycyl lysine isopeptide (Lys-Gly) (interchain with G-Cter in SUMO2) cross-link. Phosphoserine occurs at positions 1291, 1293, 1295, and 1298. Low complexity predominate over residues 1296-1306 (DVSSNESNVDV). Phosphothreonine is present on threonine 1323. The span at 1326–1345 (LDSDEDFSGLDEKDEDEDFL) shows a compositional bias: acidic residues. Serine 1328 and serine 1333 each carry phosphoserine. Residue threonine 1350 is modified to Phosphothreonine. Residues lysine 1359 and lysine 1363 each participate in a glycyl lysine isopeptide (Lys-Gly) (interchain with G-Cter in SUMO2) cross-link. Phosphoserine occurs at positions 1370 and 1373. Residue lysine 1382 forms a Glycyl lysine isopeptide (Lys-Gly) (interchain with G-Cter in SUMO2) linkage. Phosphoserine is present on residues serine 1384 and serine 1388. A Glycyl lysine isopeptide (Lys-Gly) (interchain with G-Cter in SUMO2); alternate cross-link involves residue lysine 1418. At lysine 1418 the chain carries N6-acetyllysine; alternate. The interval 1429–1435 (KKRAAPK) is interaction with PLSCR1. A Glycyl lysine isopeptide (Lys-Gly) (interchain with G-Cter in SUMO2); alternate cross-link involves residue lysine 1438. Residue lysine 1438 is modified to N6-acetyllysine; alternate. Residues lysine 1450 and lysine 1455 each participate in a glycyl lysine isopeptide (Lys-Gly) (interchain with G-Cter in SUMO2) cross-link. Residues serine 1465, serine 1467, serine 1470, and serine 1472 each carry the phosphoserine modification. Residues lysine 1480 and lysine 1488 each participate in a glycyl lysine isopeptide (Lys-Gly) (interchain with G-Cter in SUMO2) cross-link. The segment covering 1506-1519 (AKSDRARKPIKYLE) has biased composition (basic and acidic residues). Serine 1521 carries the phosphoserine modification.

It belongs to the type II topoisomerase family. In terms of assembly, homodimer. Interacts with COPS5. Interacts with RECQL5; this stimulates DNA decatenation. Interacts with SETMAR; stimulates the topoisomerase activity. Interacts with DHX9; this interaction occurs in a E2 enzyme UBE2I- and RNA-dependent manner, negatively regulates DHX9-mediated double-stranded DNA and RNA duplex helicase activity and stimulates TOP2A-mediated supercoiled DNA relaxation activity. Interacts with HNRNPU (via C-terminus); this interaction protects the topoisomerase TOP2A from degradation and positively regulates the relaxation of supercoiled DNA in a RNA-dependent manner. Interacts with MCM3AP. Interacts with ERCC6. Interacts with PLSCR1. Interacts with GCNA; this interaction allows the resolution of topoisomerase II (TOP2A) DNA-protein cross-links. Interacts with POL1RA/RPA1 (via dock II) and UBTF in the context of Pol I complex; may assist Pol I transcription initiation by releasing supercoils occurring during DNA unwinding. Interacts with TPRN; TPRN interacts with a number of DNA damage response proteins, is recruited to sites of DNA damage and may play a role in DNA damage repair. Requires Mg(2+) as cofactor. It depends on Mn(2+) as a cofactor. Ca(2+) is required as a cofactor. In terms of processing, phosphorylation has no effect on catalytic activity. However, phosphorylation at Ser-1105 by CSNK1D/CK1 promotes DNA cleavable complex formation.

Its subcellular location is the cytoplasm. It is found in the nucleus. The protein localises to the nucleoplasm. The protein resides in the nucleolus. The enzyme catalyses ATP-dependent breakage, passage and rejoining of double-stranded DNA.. Functionally, key decatenating enzyme that alters DNA topology by binding to two double-stranded DNA molecules, generating a double-stranded break in one of the strands, passing the intact strand through the broken strand, and religating the broken strand. May play a role in regulating the period length of BMAL1 transcriptional oscillation. The chain is DNA topoisomerase 2-alpha (Top2a) from Mus musculus (Mouse).